A 315-amino-acid polypeptide reads, in one-letter code: ATP synthase gamma chain (315 aa).

As to quaternary structure, F-type ATPases have 2 components, CF(1) - the catalytic core - and CF(0) - the membrane proton channel. CF(1) has five subunits: alpha(3), beta(3), gamma(1), delta(1), epsilon(1). CF(0) has four main subunits: a(1), b(1), b'(1) and c(9-12).

The protein localises to the cellular thylakoid membrane. Its function is as follows. Produces ATP from ADP in the presence of a proton gradient across the membrane. The gamma chain is believed to be important in regulating ATPase activity and the flow of protons through the CF(0) complex. In terms of biological role, the complex from the organism is particularly stable to disruption and remains functional after 6 hrs at 55 degrees Celsius. The polypeptide is ATP synthase gamma chain (Thermosynechococcus vestitus (strain NIES-2133 / IAM M-273 / BP-1)).